The primary structure comprises 460 residues: Ribosomal protein uS12 methylthiotransferase RimO (460 aa).

Residues 16–130 (NKIHFISLGC…ILSAIESKEY (115 aa)) enclose the MTTase N-terminal domain. The [4Fe-4S] cluster site is built by Cys25, Cys61, Cys93, Cys164, Cys168, and Cys171. The Radical SAM core domain occupies 150 to 382 (STPKHYAYLK…SQAQKQNVEK (233 aa)). Residues 385–455 (QKLVGQVVEA…GYDLIGRVVK (71 aa)) enclose the TRAM domain.

Belongs to the methylthiotransferase family. RimO subfamily. [4Fe-4S] cluster is required as a cofactor.

The protein localises to the cytoplasm. The enzyme catalyses L-aspartate(89)-[ribosomal protein uS12]-hydrogen + (sulfur carrier)-SH + AH2 + 2 S-adenosyl-L-methionine = 3-methylsulfanyl-L-aspartate(89)-[ribosomal protein uS12]-hydrogen + (sulfur carrier)-H + 5'-deoxyadenosine + L-methionine + A + S-adenosyl-L-homocysteine + 2 H(+). Its function is as follows. Catalyzes the methylthiolation of an aspartic acid residue of ribosomal protein uS12. The protein is Ribosomal protein uS12 methylthiotransferase RimO of Chlamydia felis (strain Fe/C-56) (Chlamydophila felis).